A 159-amino-acid polypeptide reads, in one-letter code: Protein Smg homolog (159 aa).

Belongs to the Smg family.

This chain is Protein Smg homolog, found in Vibrio campbellii (strain ATCC BAA-1116).